Reading from the N-terminus, the 154-residue chain is Protein X (154 aa).

Positions 68 to 117 (PCALRFTSARRMETTVNAPWSLPTVLHKRTIGLSGRSMTWIEEYIKDCVF) are mitochondrial targeting sequence.

It belongs to the orthohepadnavirus protein X family. As to quaternary structure, may form homodimer. May interact with host CEBPA, CFLAR, CREB1, DDB1, E4F1, HBXIP, HSPD1/HSP60, NFKBIA, POLR2E and SMAD4. Interacts with host SMC5-SMC6 complex and induces its degradation. Interacts with host TRPC4AP; leading to prevent ubiquitination of TRPC4AP. Interacts with host PLSCR1; this interaction promotes ubiquitination and degradation of HBx and impairs HBx-mediated cell proliferation. In terms of processing, a fraction may be phosphorylated in insect cells and HepG2 cells, a human hepatoblastoma cell line. Phosphorylated in vitro by host protein kinase C or mitogen-activated protein kinase. N-acetylated in insect cells.

Its subcellular location is the host cytoplasm. The protein resides in the host nucleus. It localises to the host mitochondrion. Functionally, multifunctional protein that plays a role in silencing host antiviral defenses and promoting viral transcription. Does not seem to be essential for HBV infection. May be directly involved in development of cirrhosis and liver cancer (hepatocellular carcinoma). Most of cytosolic activities involve modulation of cytosolic calcium. The effect on apoptosis is controversial depending on the cell types in which the studies have been conducted. May induce apoptosis by localizing in mitochondria and causing loss of mitochondrial membrane potential. May also modulate apoptosis by binding host CFLAR, a key regulator of the death-inducing signaling complex (DISC). Promotes viral transcription by using the host E3 ubiquitin ligase DDB1 to target the SMC5-SMC6 complex to proteasomal degradation. This host complex would otherwise bind to viral episomal DNA, and prevents its transcription. Moderately stimulates transcription of many different viral and cellular transcription elements. Promoters and enhancers stimulated by HBx contain DNA binding sites for NF-kappa-B, AP-1, AP-2, c-EBP, ATF/CREB, or the calcium-activated factor NF-AT. The chain is Protein X from Homo sapiens (Human).